The primary structure comprises 264 residues: Proteasome assembly chaperone 2 (264 aa).

At Thr-137 the chain carries Phosphothreonine.

It belongs to the PSMG2 family. As to quaternary structure, forms a heterodimer with PSMG1. The PSMG1-PSMG2 heterodimer interacts directly with the PSMA5 and PSMA7 proteasome alpha subunits. Post-translationally, degraded by the proteasome upon completion of 20S proteasome maturation. In terms of tissue distribution, widely expressed with highest levels in lung, brain and colon. Moderately expressed in muscle, stomach, spleen and heart. Weakly expressed in small intestine, pancreas and liver. Highly expressed in hepatocellular carcinomas with low levels in surrounding liver tissue.

It localises to the nucleus. Its function is as follows. Chaperone protein which promotes assembly of the 20S proteasome as part of a heterodimer with PSMG1. The PSMG1-PSMG2 heterodimer binds to the PSMA5 and PSMA7 proteasome subunits, promotes assembly of the proteasome alpha subunits into the heteroheptameric alpha ring and prevents alpha ring dimerization. This is Proteasome assembly chaperone 2 from Homo sapiens (Human).